The primary structure comprises 116 residues: NADH-ubiquinone oxidoreductase chain 3 (116 aa).

Transmembrane regions (helical) follow at residues 3–23, 56–76, and 85–105; these read LVIS…VVSF, FFLV…LLAL, and ATGT…GLIY.

Belongs to the complex I subunit 3 family.

The protein localises to the mitochondrion membrane. It catalyses the reaction a ubiquinone + NADH + 5 H(+)(in) = a ubiquinol + NAD(+) + 4 H(+)(out). Core subunit of the mitochondrial membrane respiratory chain NADH dehydrogenase (Complex I) that is believed to belong to the minimal assembly required for catalysis. Complex I functions in the transfer of electrons from NADH to the respiratory chain. The immediate electron acceptor for the enzyme is believed to be ubiquinone. The chain is NADH-ubiquinone oxidoreductase chain 3 (MT-ND3) from Formosania lacustris (Oriental stream loach).